A 110-amino-acid polypeptide reads, in one-letter code: MAGWFELSKSSDNQFRFVLKAGNGETILTSELYTSKASAEKGIASVRSNSPQEERYEKKTASNGKFYFNLKAANHQIIGSSQMYATAQSRETGIASVKANGTSQTVKDNT.

Tandem repeats lie at residues 10–58 (SSDN…RYEK) and 61–109 (ASNG…VKDN).

The protein belongs to the UPF0339 family. Duplicated subfamily.

The chain is UPF0339 protein YegP (yegP) from Shigella flexneri.